The chain runs to 452 residues: UDP-N-acetylmuramoyl-L-alanine--L-glutamate ligase (452 aa).

118-124 serves as a coordination point for ATP; sequence GSKGKST.

It belongs to the MurCDEF family. MurD2 subfamily.

The protein localises to the cytoplasm. The enzyme catalyses UDP-N-acetyl-alpha-D-muramoyl-L-alanine + L-glutamate + ATP = UDP-N-acetyl-alpha-D-muramoyl-L-alanyl-L-glutamate + ADP + phosphate + H(+). Its pathway is cell wall biogenesis; peptidoglycan biosynthesis. Functionally, cell wall formation. Catalyzes the addition of L-glutamate to the nucleotide precursor UDP-N-acetylmuramoyl-L-alanine. This Micromonospora sp. (strain ATCC 39149 / NRRL 15099 / SCC 1413) protein is UDP-N-acetylmuramoyl-L-alanine--L-glutamate ligase.